A 580-amino-acid polypeptide reads, in one-letter code: L-aspartate oxidase (580 aa).

FAD contacts are provided by residues 26 to 29 (SGVA), K49, 56 to 63 (STRWAQGG), and D227. Residue R297 is the Proton donor/acceptor of the active site. Residues E382 and 398–399 (SL) contribute to the FAD site. Residues 556-580 (VHTTDTPEFPPTVHGAQPTHRPQEQ) are disordered.

This sequence belongs to the FAD-dependent oxidoreductase 2 family. NadB subfamily. It depends on FAD as a cofactor.

The protein localises to the cytoplasm. The enzyme catalyses L-aspartate + O2 = iminosuccinate + H2O2. The protein operates within cofactor biosynthesis; NAD(+) biosynthesis; iminoaspartate from L-aspartate (oxidase route): step 1/1. In terms of biological role, catalyzes the oxidation of L-aspartate to iminoaspartate, the first step in the de novo biosynthesis of NAD(+). This Streptomyces coelicolor (strain ATCC BAA-471 / A3(2) / M145) protein is L-aspartate oxidase (nadB).